Here is a 184-residue protein sequence, read N- to C-terminus: Peptide deformylase (184 aa).

Fe cation-binding residues include Cys96 and His138. Glu139 is a catalytic residue. His142 is a Fe cation binding site.

Belongs to the polypeptide deformylase family. It depends on Fe(2+) as a cofactor.

The catalysed reaction is N-terminal N-formyl-L-methionyl-[peptide] + H2O = N-terminal L-methionyl-[peptide] + formate. Removes the formyl group from the N-terminal Met of newly synthesized proteins. Requires at least a dipeptide for an efficient rate of reaction. N-terminal L-methionine is a prerequisite for activity but the enzyme has broad specificity at other positions. The polypeptide is Peptide deformylase (Cytophaga hutchinsonii (strain ATCC 33406 / DSM 1761 / CIP 103989 / NBRC 15051 / NCIMB 9469 / D465)).